The following is an 87-amino-acid chain: Large ribosomal subunit protein bL27 (87 aa).

A disordered region spans residues 1-21 (MAHKKAGGSSRNGRDSESKRL).

This sequence belongs to the bacterial ribosomal protein bL27 family.

The chain is Large ribosomal subunit protein bL27 from Paraburkholderia xenovorans (strain LB400).